The following is a 104-amino-acid chain: Large ribosomal subunit protein uL24 (104 aa).

Belongs to the universal ribosomal protein uL24 family. In terms of assembly, part of the 50S ribosomal subunit.

Its function is as follows. One of two assembly initiator proteins, it binds directly to the 5'-end of the 23S rRNA, where it nucleates assembly of the 50S subunit. Functionally, one of the proteins that surrounds the polypeptide exit tunnel on the outside of the subunit. In Clostridium beijerinckii (strain ATCC 51743 / NCIMB 8052) (Clostridium acetobutylicum), this protein is Large ribosomal subunit protein uL24.